The primary structure comprises 300 residues: Protein sprouty homolog 4 (300 aa).

Methionine 1 bears the N-acetylmethionine mark. Disordered regions lie at residues 1–28 (MEPP…SRAP) and 52–114 (DYID…RLLD). Low complexity-rich tracts occupy residues 7–21 (QSSV…MVQP) and 92–108 (SFSG…STSS). Serine 126 is modified (phosphoserine). In terms of domain architecture, SPR spans 167–274 (KCKECASPRT…GYDRLRRPGC (108 aa)).

This sequence belongs to the sprouty family. In terms of assembly, interacts (via C-terminus) with TESK1 (via both C- and N-termini); the interaction inhibits TESK1 kinase activity. Interacts with RAF1. Interacts with CAV1 (via C-terminus). In terms of tissue distribution, expressed in the embryo and adult tissues including heart, brain, lung, kidney, and skeletal muscle.

Its subcellular location is the cytoplasm. The protein resides in the cell projection. The protein localises to the ruffle membrane. In terms of biological role, suppresses the insulin receptor and EGFR-transduced MAPK signaling pathway, but does not inhibit MAPK activation by a constitutively active mutant Ras. Probably impairs the formation of GTP-Ras. Inhibits Ras-independent, but not Ras-dependent, activation of RAF1. Represses integrin-mediated cell spreading via inhibition of TESK1-mediated phosphorylation of cofilin. This chain is Protein sprouty homolog 4 (Spry4), found in Mus musculus (Mouse).